A 524-amino-acid chain; its full sequence is CDC50-related protein CDC50.1 (524 aa).

2 stretches are compositionally biased toward polar residues: residues 1–19 (MGEN…SQFS) and 26–39 (TLSS…QQSL). 2 disordered regions span residues 1-40 (MGEN…QSLP) and 52-86 (APSV…DAGS). The Cytoplasmic segment spans residues 1–181 (MGENSTTGLR…GMYPLWSAGV (181 aa)). Over residues 67-80 (GSSRLTSRGTSLSS) the composition is skewed to low complexity. The chain crosses the membrane as a helical span at residues 182 to 202 (VLRLCLLGALFFVSVGAWLIF). The Extracellular segment spans residues 203-473 (EDEQHVECKL…VQKSRLGGRS (271 aa)). Residues Asn297 and Asn339 are each glycosylated (N-linked (GlcNAc...) asparagine). A helical membrane pass occupies residues 474–494 (LFIGIAYLSFGCLLTMLVFYM). The Cytoplasmic portion of the chain corresponds to 495–524 (LWKKWQYRREGEEIRDLRWQTKTRGSKKTK).

It belongs to the CDC50/LEM3 family. As to quaternary structure, interacts with GC; the interaction regulates guanylate cyclase GC trafficking and sensing environmental changes.

It localises to the membrane. Its function is as follows. In tachyzoites, required for the cellular trafficking of guanylate cyclase GC and UGO to the cell membrane. May play a role in the folding of the GC P-type ATPase-like domain to sense vacuolar changes in phosphatidic acid and pH levels which trigger parasite egress. The chain is CDC50-related protein CDC50.1 from Toxoplasma gondii (strain ATCC 50853 / GT1).